The primary structure comprises 77 residues: Adipokinetic prohormone type 3 (77 aa).

Positions 1–22 are cleaved as a signal peptide; it reads MQVRAVLVLAVVALVAVATSRA. Gln-23 bears the Pyrrolidone carboxylic acid mark. Trp-30 is subject to Tryptophan amide.

The protein belongs to the AKH/HRTH/RPCH family.

The protein localises to the secreted. Functionally, this hormone, released from cells in the corpora cardiaca, causes release of diglycerides from the fat body and stimulation of muscles to use these diglycerides as an energy source during energy-demanding processes. The sequence is that of Adipokinetic prohormone type 3 from Locusta migratoria (Migratory locust).